We begin with the raw amino-acid sequence, 243 residues long: Type III pantothenate kinase (243 aa).

6 to 13 (DIGNTNLK) is an ATP binding site. 101 to 104 (GSDI) is a binding site for substrate. Aspartate 103 acts as the Proton acceptor in catalysis. Residue threonine 125 participates in ATP binding. Position 176 (threonine 176) interacts with substrate.

The protein belongs to the type III pantothenate kinase family. In terms of assembly, homodimer. Requires NH4(+) as cofactor. The cofactor is K(+).

Its subcellular location is the cytoplasm. It carries out the reaction (R)-pantothenate + ATP = (R)-4'-phosphopantothenate + ADP + H(+). It functions in the pathway cofactor biosynthesis; coenzyme A biosynthesis; CoA from (R)-pantothenate: step 1/5. Its function is as follows. Catalyzes the phosphorylation of pantothenate (Pan), the first step in CoA biosynthesis. In Mycoplasma mobile (strain ATCC 43663 / 163K / NCTC 11711) (Mesomycoplasma mobile), this protein is Type III pantothenate kinase.